The chain runs to 1369 residues: ATP-dependent RNA helicase DHX29 (1369 aa).

Disordered stretches follow at residues 27 to 75 and 176 to 226; these read SAEA…TNDS and SQEF…KNME. Serine 71, serine 192, and serine 200 each carry phosphoserine. Residues 189 to 201 show a composition bias toward polar residues; sequence KFQSPQIQATISP. The segment covering 208-226 has biased composition (basic and acidic residues); it reads KTYEEDPKSKPKKEEKNME. 3 coiled-coil regions span residues 222–256, 283–310, and 492–519; these read EKNMEVNMKEWILRYAEQQNEEEKNENSKSLEEEE, LEKNKQGQKEAQEKIRKFQREMETLEDH, and IAKLLNKLKQQQQQQQQHSENKRENSED. A disordered region spans residues 502-526; it reads QQQQQQQHSENKRENSEDPEESWEN. Residues 582 to 755 form the Helicase ATP-binding domain; the sequence is VETLKRHRVV…FTHCPILRIS (174 aa). 595 to 602 contributes to the ATP binding site; the sequence is GETGSGKS. A DEAH box motif is present at residues 702–705; the sequence is DEVH. Residues 849 to 1026 form the Helicase C-terminal domain; sequence LILELLAYLD…ELCLHIMKCN (178 aa).

This sequence belongs to the DEAD box helicase family. DEAH subfamily. As to quaternary structure, part of the 43S pre-initiation complex (PIC) that contains at least Met-tRNA, EIF1, EIF1A (EIF1AX or EIF1AY), EIF2S1, EIF2S2, EIF2S3, EIF3A, EIF3B, EIF3C, EIF3D, EIF3E, EIF3F, EIF3G, EIF3H, EIF3I, EIF3J, EIF3K, EIF3L, EIF3M, DHX29 and the 40S ribosomal subunit.

It localises to the cytoplasm. It carries out the reaction ATP + H2O = ADP + phosphate + H(+). ATP-binding RNA helicase involved in translation initiation. Part of the 43S pre-initiation complex that is required for efficient initiation on mRNAs of higher eukaryotes with structured 5'-UTRs by promoting efficient NTPase-dependent 48S complex formation. Specifically binds to the 40S ribosome near the mRNA entrance. Does not possess a processive helicase activity. The polypeptide is ATP-dependent RNA helicase DHX29 (Homo sapiens (Human)).